The chain runs to 444 residues: GTPase Der (444 aa).

EngA-type G domains lie at 3-167 (PIVA…PEAE) and 180-353 (LRLA…AECQ). GTP-binding positions include 9–16 (GRPNVGKS), 56–60 (DTGGM), 119–122 (NKVD), 186–193 (GRPNAGKS), 233–237 (DTAGV), and 298–301 (NKTD). Residues 354–438 (IRIGTGELNR…PVKVVCRASH (85 aa)) form the KH-like domain.

The protein belongs to the TRAFAC class TrmE-Era-EngA-EngB-Septin-like GTPase superfamily. EngA (Der) GTPase family. As to quaternary structure, associates with the 50S ribosomal subunit.

Functionally, GTPase that plays an essential role in the late steps of ribosome biogenesis. The polypeptide is GTPase Der (Solidesulfovibrio magneticus (strain ATCC 700980 / DSM 13731 / RS-1) (Desulfovibrio magneticus)).